A 91-amino-acid polypeptide reads, in one-letter code: Secretoglobin family 3A member 2 (91 aa).

Positions 1–21 are cleaved as a signal peptide; sequence MKLVSIFLLVTIGICGYSATA.

Belongs to the secretoglobin family. UGRP subfamily. Homodimer; disulfide-linked. Monomer. Interacts with APOA1. In terms of tissue distribution, highly expressed in lung where it localizes to epithelial cells of the trachea, bronchus and bronchioles (at protein level). Expressed in club cells of the bronchioles. Also detected in the anterior and posterior lobes of the pituitary gland where it may localize to gonadotropic cells (at protein level). Not detected in other tissues tested.

It localises to the secreted. Its function is as follows. Secreted cytokine-like protein. Binds to the scavenger receptor MARCO. Can also bind to pathogens including the Gram-positive bacterium L.monocytogenes, the Gram-negative bacterium P.aeruginosa, and yeast. Strongly inhibits phospholipase A2 (PLA2G1B) activity. Seems to have anti-inflammatory effects in respiratory epithelium. Also has anti-fibrotic activity in lung. May play a role in fetal lung development and maturation. Promotes branching morphogenesis during early stages of lung development. In the pituitary, may inhibit production of follicle-stimulating hormone (FSH) and luteinizing hormone (LH). This Mus musculus (Mouse) protein is Secretoglobin family 3A member 2 (Scgb3a2).